A 526-amino-acid chain; its full sequence is Glucose-6-phosphate isomerase (526 aa).

Catalysis depends on glutamate 343, which acts as the Proton donor. Catalysis depends on residues histidine 374 and lysine 494.

The protein belongs to the GPI family.

It is found in the cytoplasm. It carries out the reaction alpha-D-glucose 6-phosphate = beta-D-fructose 6-phosphate. The protein operates within carbohydrate biosynthesis; gluconeogenesis. It participates in carbohydrate degradation; glycolysis; D-glyceraldehyde 3-phosphate and glycerone phosphate from D-glucose: step 2/4. Functionally, catalyzes the reversible isomerization of glucose-6-phosphate to fructose-6-phosphate. The polypeptide is Glucose-6-phosphate isomerase (Dechloromonas aromatica (strain RCB)).